The following is a 144-amino-acid chain: Large ribosomal subunit protein uL13 (144 aa).

It belongs to the universal ribosomal protein uL13 family. Part of the 50S ribosomal subunit.

Functionally, this protein is one of the early assembly proteins of the 50S ribosomal subunit, although it is not seen to bind rRNA by itself. It is important during the early stages of 50S assembly. The protein is Large ribosomal subunit protein uL13 of Herpetosiphon aurantiacus (strain ATCC 23779 / DSM 785 / 114-95).